Here is a 345-residue protein sequence, read N- to C-terminus: UPF0284 protein STK_21430 (345 aa).

Belongs to the UPF0284 family.

This chain is UPF0284 protein STK_21430, found in Sulfurisphaera tokodaii (strain DSM 16993 / JCM 10545 / NBRC 100140 / 7) (Sulfolobus tokodaii).